The following is a 669-amino-acid chain: Beta-galactosidase (669 aa).

The N-terminal stretch at 1 to 24 (MDFPGAARLLSLLLVPLLLGPARG) is a signal peptide. Residues 25–29 (LRNAS) constitute a propeptide that is removed on maturation. Asparagine 27 carries N-linked (GlcNAc...) asparagine glycosylation. Tyrosine 84, glutamate 130, and asparagine 188 together coordinate substrate. The Proton donor role is filled by glutamate 189. A disulfide bridge links cysteine 196 with cysteine 231. Asparagine 248 carries N-linked (GlcNAc...) asparagine glycosylation. Residue glutamate 269 is the Nucleophile of the active site. Residue tyrosine 334 participates in substrate binding. N-linked (GlcNAc...) asparagine glycans are attached at residues asparagine 465, asparagine 499, asparagine 547, and asparagine 557. A disulfide bridge connects residues cysteine 628 and cysteine 636. A disordered region spans residues 649–669 (TPTSSHPLPDLSDRDSGWDRV). Basic and acidic residues predominate over residues 659-669 (LSDRDSGWDRV).

It belongs to the glycosyl hydrolase 35 family. As to quaternary structure, homodimer. May form higher multimers.

The protein resides in the lysosome. The catalysed reaction is Hydrolysis of terminal non-reducing beta-D-galactose residues in beta-D-galactosides.. In terms of biological role, cleaves beta-linked terminal galactosyl residues from gangliosides, glycoproteins, and glycosaminoglycans. This chain is Beta-galactosidase (GLB1), found in Felis catus (Cat).